The primary structure comprises 63 residues: MKAKELREKSVEELNTELLNLLREQFNLRMQAASGQLQQSHLLKQVRRDVARVKTLLNEKAGA.

It belongs to the universal ribosomal protein uL29 family.

This is Large ribosomal subunit protein uL29 from Escherichia coli O8 (strain IAI1).